A 136-amino-acid chain; its full sequence is MAGKGGKGLVAAKTMAANKDKDKDKKKPISRSARAGIQFPVGRIHRQLKTRVSAHGRVGATAAVYTASILEYLTAEVLELAGNASKDLKVKRITPRHLQLAIRGDEELDTLIKGTIAGGGVIPHIHKSLINKTTKE.

The segment at 1-35 is disordered; the sequence is MAGKGGKGLVAAKTMAANKDKDKDKKKPISRSARA. The span at 18-27 shows a compositional bias: basic and acidic residues; sequence NKDKDKDKKK.

Belongs to the histone H2A family. In terms of assembly, the nucleosome is a histone octamer containing two molecules each of H2A, H2B, H3 and H4 assembled in one H3-H4 heterotetramer and two H2A-H2B heterodimers. The octamer wraps approximately 147 bp of DNA.

The protein localises to the nucleus. The protein resides in the chromosome. Its function is as follows. Variant histone H2A which may replace conventional H2A in a subset of nucleosomes. Nucleosomes wrap and compact DNA into chromatin, limiting DNA accessibility to the cellular machineries which require DNA as a template. Histones thereby play a central role in transcription regulation, DNA repair, DNA replication and chromosomal stability. DNA accessibility is regulated via a complex set of post-translational modifications of histones, also called histone code, and nucleosome remodeling. The sequence is that of Histone H2A variant 1 (H2AV) from Arabidopsis thaliana (Mouse-ear cress).